We begin with the raw amino-acid sequence, 227 residues long: MSASTTSLEEYQKTFLELGLECKALRFGSFKLNSGRQSPYFFNLSLFNSGKLLANLATAYATAIIQSELKFDVIFGPAYKGIPLAAIVCVKLAEIGGTKFQGIQYAFNRKKVKDHGEGGIIVGASLEDKRVLIIDDVMTAGTAINEAFEIISIAQGRVVGCIVALDRQEVIHESDPERTSATQSVSKRYNVPVLSIVSLTQVVQFMGNRLSPEQKSAIENYRKAYGI.

41 to 42 (FF) lines the orotate pocket. Residues 79 to 80 (YK), Arg109, Lys110, Lys113, His115, and 135 to 143 (DDVMTAGTA) each bind 5-phospho-alpha-D-ribose 1-diphosphate. Residues Thr139 and Arg167 each contribute to the orotate site.

This sequence belongs to the purine/pyrimidine phosphoribosyltransferase family. PyrE subfamily. Homodimer.

The catalysed reaction is orotidine 5'-phosphate + diphosphate = orotate + 5-phospho-alpha-D-ribose 1-diphosphate. It participates in pyrimidine metabolism; UMP biosynthesis via de novo pathway; UMP from orotate: step 1/2. Catalyzes the transfer of a ribosyl phosphate group from 5-phosphoribose 1-diphosphate to orotate, leading to the formation of orotidine monophosphate (OMP). This Saccharomyces cerevisiae (strain ATCC 204508 / S288c) (Baker's yeast) protein is Orotate phosphoribosyltransferase 2 (URA10).